Here is a 172-residue protein sequence, read N- to C-terminus: Small ribosomal subunit protein uS13 (172 aa).

The tract at residues 131–172 is disordered; it reads GQRTRTTGRTGVTVGVRRSKAAQAAQQQQKAQASSGGEKKQG. Residues 134 to 163 are compositionally biased toward low complexity; it reads TRTTGRTGVTVGVRRSKAAQAAQQQQKAQA.

It belongs to the universal ribosomal protein uS13 family. In terms of assembly, part of the 30S ribosomal subunit. Forms a loose heterodimer with protein S19. Forms two bridges to the 50S subunit in the 70S ribosome.

Functionally, located at the top of the head of the 30S subunit, it contacts several helices of the 16S rRNA. In the 70S ribosome it contacts the 23S rRNA (bridge B1a) and protein L5 of the 50S subunit (bridge B1b), connecting the 2 subunits; these bridges are implicated in subunit movement. The sequence is that of Small ribosomal subunit protein uS13 from Sulfurisphaera tokodaii (strain DSM 16993 / JCM 10545 / NBRC 100140 / 7) (Sulfolobus tokodaii).